The sequence spans 747 residues: Polyribonucleotide nucleotidyltransferase (747 aa).

The Mg(2+) site is built by Asp487 and Asp493. Residues 554–613 (PSTTTIKIDKDKIRDVIGPGGKVIKEICETSDAKIDISDDGTVSVYASDRDKLKVALDKI) enclose the KH domain. The region spanning 623-691 (GEIFNGTVMK…NKGKAKLTIK (69 aa)) is the S1 motif domain. Residues 691–747 (KNADKDKSSNNPKQKNNVNNSKENSEPERRDSSKKRAWNEDNNSDTTEVITERKYFN) are disordered. Over residues 699-712 (SNNPKQKNNVNNSK) the composition is skewed to low complexity. The span at 730-739 (EDNNSDTTEV) shows a compositional bias: polar residues.

It belongs to the polyribonucleotide nucleotidyltransferase family. Requires Mg(2+) as cofactor.

It localises to the cytoplasm. The enzyme catalyses RNA(n+1) + phosphate = RNA(n) + a ribonucleoside 5'-diphosphate. Its function is as follows. Involved in mRNA degradation. Catalyzes the phosphorolysis of single-stranded polyribonucleotides processively in the 3'- to 5'-direction. The protein is Polyribonucleotide nucleotidyltransferase of Rickettsia akari (strain Hartford).